The primary structure comprises 462 residues: Myo-inositol transporter 3B (462 aa).

The next 10 helical transmembrane spans lie at 1–21, 31–51, 61–81, 91–111, 194–214, 218–238, 245–265, 289–309, 324–344, and 354–374; these read MAILISDVFFTIGAVLIASSY, IILGIGVGGAAVIAPLFITET, IGVNAFFIPFGQVVADAIGAG, LLFALGVVPSVLQLLLFHYLP, LCGFNTLLYYAGTLFGLLGLS, LGGLIPAGTNAVFVLIGMSLV, GLMLFGVPIMLLGLVWNIIGF, VVIGGIVFFVVGYGLTYSHLV, GSGVATTVCWIANLVVSVSYL, and GTYGFYLGLSVIGFAFVVFCF.

The protein belongs to the major facilitator superfamily. Sugar transporter (TC 2.A.1.1) family.

Its subcellular location is the cell membrane. The catalysed reaction is myo-inositol(out) + H(+)(out) = myo-inositol(in) + H(+)(in). Functionally, transporter for myo-inositol. The polypeptide is Myo-inositol transporter 3B (Cryptococcus neoformans var. grubii serotype A (strain H99 / ATCC 208821 / CBS 10515 / FGSC 9487) (Filobasidiella neoformans var. grubii)).